The primary structure comprises 126 residues: Glycine cleavage system H protein (126 aa).

Residues 23 to 104 (KVRVGITDFA…YDEGWMIEII (82 aa)) enclose the Lipoyl-binding domain. K64 is subject to N6-lipoyllysine.

This sequence belongs to the GcvH family. The glycine cleavage system is composed of four proteins: P, T, L and H. (R)-lipoate serves as cofactor.

Its function is as follows. The glycine cleavage system catalyzes the degradation of glycine. The H protein shuttles the methylamine group of glycine from the P protein to the T protein. This Chlorobium phaeobacteroides (strain BS1) protein is Glycine cleavage system H protein.